Here is a 309-residue protein sequence, read N- to C-terminus: Foldase protein PrsA 2 (309 aa).

The signal sequence occupies residues 1–22 (MKQMNKLITGVVTLATVVTLSA). C23 carries the N-palmitoyl cysteine lipid modification. C23 carries the S-diacylglycerol cysteine lipid modification. In terms of domain architecture, PpiC spans 146-241 (TPTMTAEIMQ…RTYHIIKVTK (96 aa)).

Belongs to the PrsA family.

It localises to the cell membrane. The enzyme catalyses [protein]-peptidylproline (omega=180) = [protein]-peptidylproline (omega=0). Its function is as follows. Plays a major role in protein secretion by helping the post-translocational extracellular folding of several secreted proteins. In Streptococcus pyogenes serotype M1, this protein is Foldase protein PrsA 2 (prsA2).